A 603-amino-acid chain; its full sequence is Elongation factor 4 (603 aa).

The tr-type G domain occupies 7-189 (KKIRNFCIIA…SVVKNVPPPE (183 aa)). GTP contacts are provided by residues 19–24 (DHGKST) and 136–139 (NKID).

This sequence belongs to the TRAFAC class translation factor GTPase superfamily. Classic translation factor GTPase family. LepA subfamily.

Its subcellular location is the cell membrane. It carries out the reaction GTP + H2O = GDP + phosphate + H(+). Its function is as follows. Required for accurate and efficient protein synthesis under certain stress conditions. May act as a fidelity factor of the translation reaction, by catalyzing a one-codon backward translocation of tRNAs on improperly translocated ribosomes. Back-translocation proceeds from a post-translocation (POST) complex to a pre-translocation (PRE) complex, thus giving elongation factor G a second chance to translocate the tRNAs correctly. Binds to ribosomes in a GTP-dependent manner. This is Elongation factor 4 from Acetivibrio thermocellus (strain ATCC 27405 / DSM 1237 / JCM 9322 / NBRC 103400 / NCIMB 10682 / NRRL B-4536 / VPI 7372) (Clostridium thermocellum).